The following is a 436-amino-acid chain: tRNA(Ile)-lysidine synthase (436 aa).

Residue 21-26 coordinates ATP; the sequence is SGGVDS.

The protein belongs to the tRNA(Ile)-lysidine synthase family.

The protein localises to the cytoplasm. The catalysed reaction is cytidine(34) in tRNA(Ile2) + L-lysine + ATP = lysidine(34) in tRNA(Ile2) + AMP + diphosphate + H(+). Ligates lysine onto the cytidine present at position 34 of the AUA codon-specific tRNA(Ile) that contains the anticodon CAU, in an ATP-dependent manner. Cytidine is converted to lysidine, thus changing the amino acid specificity of the tRNA from methionine to isoleucine. The polypeptide is tRNA(Ile)-lysidine synthase (Aster yellows witches'-broom phytoplasma (strain AYWB)).